The primary structure comprises 152 residues: Small ribosomal subunit protein uS15 (152 aa).

A compositionally biased stretch (basic residues) spans 1-11 (MAKMHTKRKGK). The interval 1 to 23 (MAKMHTKRKGKSSSTRPIRTDPP) is disordered.

This sequence belongs to the universal ribosomal protein uS15 family. In terms of assembly, part of the 30S ribosomal subunit.

In Methanosarcina acetivorans (strain ATCC 35395 / DSM 2834 / JCM 12185 / C2A), this protein is Small ribosomal subunit protein uS15.